The sequence spans 475 residues: MAAYFLLGLYGSTLVYRLIFHPLNRFPGPLAARISDLWLCTQLGGHDMHHLSERLSKRYGEFVRIGSSTLMLTHPKAVAAIYGPGSPCRKGTFYDLEQPNRGIATRDESLHAGRRRVWSRGFGDKALRTYEPRVAAYVHMLLGRLADARGKPVDMARLAEAFAFDTMGDLGLGADFGMLRQARTHEAVEQLVQGMTIMGRRLPMWLMRLLIDVAQALVPTAATTGFLGFCHHHLDRFMADPRRSERPSLMAPLLSHYEKQNIADRDLSILRNDCRFIIIAGSDTVAATLTFAFFYLAKHPGHVTRLREELFPLRAADGTFSHQRIFDAPHLNAVINETLRLHPPASTIPRVTPPQGLVVADTFIPGDMTVFSSQYALGRSEAIYSKASDFIPERWCSRPDLIKDGSAYAPFSIGHHSCLGRPLALMEMRLVLAETLSRFDIAFAPGFDANHFLQHVHDCMSWHIGKLGLTFTAIE.

Positions 1 to 17 (MAAYFLLGLYGSTLVYR) are cleaved as a signal peptide. A helical transmembrane segment spans residues 276–296 (FIIIAGSDTVAATLTFAFFYL). The N-linked (GlcNAc...) asparagine glycan is linked to asparagine 336. Residue cysteine 418 coordinates heme.

This sequence belongs to the cytochrome P450 family. The cofactor is heme.

The protein localises to the membrane. The enzyme catalyses betaenone A + NADPH + O2 + H(+) = stemphyloxin II + NADP(+) + H2O. It catalyses the reaction betaenone C + NADPH + O2 + H(+) = stemphyloxin I + NADP(+) + H2O. It participates in mycotoxin biosynthesis. In terms of biological role, cytochrome P450 monooxygenase; part of the gene cluster that mediates the biosynthesis of the phytotoxin stemphyloxin II. The first step of the pathway is the synthesis of dehydroprobetaenone I by the polyketide synthase sthA and the enoyl reductase sthE via condensation of one acetyl-CoA starter unit with 7 malonyl-CoA units and 5 methylations. The C-terminal reductase (R) domain of sthA catalyzes the reductive release of the polyketide chain. Because sthA lacks a designated enoylreductase (ER) domain, the required activity is provided the enoyl reductase sthE. The short-chain dehydrogenase/reductase sthC then catalyzes reduction of dehydroprobetaenone I to probetaenone I. The cytochrome P450 monooxygenase sthF catalyzes successive epoxidation, oxidation (resulting from epoxide opening) and hydroxylation to install a tertiary alcohol in the decaline ring to yield betaenone C from dehydroprobetaenone I and betaenone B from probetaenone I. The FAD-linked oxidoreductase sthB is responsible for the conversion of betaenone C to betaenone A via an intramolecular aldol reaction between C-1 and C-17 to form the bridged tricyclic system in betaenone A. Finally, the cytochrome P450 monooxygenase sthD catalyzes the hydroxylation of C-15 to afford the final metabolite stemphyloxin II. This chain is Cytochrome P450 monooxygenase sthD, found in Phaeosphaeria nodorum (strain SN15 / ATCC MYA-4574 / FGSC 10173) (Glume blotch fungus).